A 92-amino-acid polypeptide reads, in one-letter code: Small ribosomal subunit protein uS19 (92 aa).

The protein belongs to the universal ribosomal protein uS19 family.

In terms of biological role, protein S19 forms a complex with S13 that binds strongly to the 16S ribosomal RNA. This is Small ribosomal subunit protein uS19 from Polynucleobacter asymbioticus (strain DSM 18221 / CIP 109841 / QLW-P1DMWA-1) (Polynucleobacter necessarius subsp. asymbioticus).